The primary structure comprises 830 residues: Eisosome protein 1 (830 aa).

3 disordered regions span residues 1 to 29 (MSLVSAVTGDESRDTNGAEQSSVYQSAGK), 128 to 156 (RSRTSSTASTTVTYVNSSSSSPLHSKTPK), and 650 to 830 (GEFL…KEVF). Low complexity-rich tracts occupy residues 128-148 (RSRTSSTASTTVTYVNSSSSS) and 741-761 (TKTTQPTPLKSSPKPSNKPVT). Over residues 810 to 830 (EGGKEEPTSKDNRKSLFKEVF) the composition is skewed to basic and acidic residues.

This sequence belongs to the EIS1 family.

The protein localises to the cytoplasmic granule. The protein resides in the cell membrane. Functionally, required for normal formation of eisosomes, large cytoplasmic protein assemblies that localize to specialized domains on plasma membrane and mark the site of endocytosis. The polypeptide is Eisosome protein 1 (EIS1) (Kluyveromyces lactis (strain ATCC 8585 / CBS 2359 / DSM 70799 / NBRC 1267 / NRRL Y-1140 / WM37) (Yeast)).